We begin with the raw amino-acid sequence, 437 residues long: UDP-N-acetylmuramoylalanine--D-glutamate ligase (437 aa).

Glycine 115 to threonine 121 contributes to the ATP binding site.

This sequence belongs to the MurCDEF family.

It localises to the cytoplasm. The catalysed reaction is UDP-N-acetyl-alpha-D-muramoyl-L-alanine + D-glutamate + ATP = UDP-N-acetyl-alpha-D-muramoyl-L-alanyl-D-glutamate + ADP + phosphate + H(+). Its pathway is cell wall biogenesis; peptidoglycan biosynthesis. Cell wall formation. Catalyzes the addition of glutamate to the nucleotide precursor UDP-N-acetylmuramoyl-L-alanine (UMA). The chain is UDP-N-acetylmuramoylalanine--D-glutamate ligase from Vibrio parahaemolyticus serotype O3:K6 (strain RIMD 2210633).